The following is a 286-amino-acid chain: Versiconal hemiacetal acetate esterase stcI (286 aa).

Residues 54-56 carry the Involved in the stabilization of the negatively charged intermediate by the formation of the oxyanion hole motif; that stretch reads HAG. Residues serine 123, aspartate 226, and histidine 256 contribute to the active site.

This sequence belongs to the 'GDXG' lipolytic enzyme family.

The catalysed reaction is (2S,3S)-versiconal hemiacetal acetate + H2O = (2S-3S)-versiconal hemiacetal + acetate + H(+). It catalyses the reaction (3S)-versiconol acetate + H2O = (S)-versiconol + acetate + H(+). The protein operates within mycotoxin biosynthesis; sterigmatocystin biosynthesis. Esterase; part of the gene cluster that mediates the biosynthesis of sterigmatocystin (ST), a polyketide-derived furanocoumarin which is part of the most toxic and carcinogenic compounds among the known mycotoxins. The first step in the biosynthesis of sterigmatocystin is the production of hexanoate by the fatty acid synthase (FAS) units stcJ and stcK. The polyketide backbone is assembled by the non-reducing polyketide synthase stcA by condensation of the starter hexanoyl-CoA and 7 malonyl-CoA extender units followed by cyclization and release of norsolorinic acid. Norsolorinic acid is the first stable intermediate in the biosynthesis of sterigmatocystin and is converted into averantin (AVN) by the ketoreductase stcE which reduces the hexanoate ketone to an alcohol. Averantin is then oxidized into 5'-hydroxyaverantin (HAVN) by the cytochrome P450 monooxygenase stcF. 5'-hydroxyaverantin is further converted to 5'-oxyaverantin (OAVN) by the 5'-hydroxyaverantin dehydrogenase stcG. The next step is the conversion of OAVN into averufin (AVF) which is catalyzed by a yet to be identified enzyme. The cytochrome P450 monooxygenase stcB and the flavin-binding monooxygenase stcW are both required for the conversion of averufin to 1-hydroxyversicolorone. The esterase stcI probably catalyzes the formation of versiconal hemiacetal acetate from 1-hydroxyversicolorone. The oxydoreductase stcN then probably catalyzes the biosynthetic step from versiconal to versicolorin B (VERB). The next step is performed by the versicolorin B desaturase stcL to produce versicolorin A (VERA). The ketoreductase stcU and the cytochrome P450 monooxygenase stcS are involved in the conversion of versicolorin A to demethylsterigmatocystin. The Baeyer-Villiger oxidas stcQ and the reductase stcR might be involved in the biosynthetic step from versicolorin A to demethylsterigmatocystin. The final step in the biosynthesis of sterigmatocystin is the methylation of demethylsterigmatocystin catalyzed by the methyltransferase stcP. This chain is Versiconal hemiacetal acetate esterase stcI, found in Emericella nidulans (strain FGSC A4 / ATCC 38163 / CBS 112.46 / NRRL 194 / M139) (Aspergillus nidulans).